Reading from the N-terminus, the 382-residue chain is Mitogen-activated protein kinase 9 (382 aa).

One can recognise a Protein kinase domain in the interval 26 to 321; sequence YQQLKPIGSG…VDEALRHPYI (296 aa). Residues 33 to 38 and lysine 55 contribute to the ATP site; that span reads GSGAQG. Residue aspartate 151 is the Proton acceptor of the active site. Threonine 183 carries the post-translational modification Phosphothreonine. The TXY signature appears at 183-185; that stretch reads TPY. Tyrosine 185 carries the phosphotyrosine modification.

The protein belongs to the protein kinase superfamily. CMGC Ser/Thr protein kinase family. MAP kinase subfamily. The cofactor is Mg(2+). Post-translationally, dually phosphorylated on Thr-183 and Tyr-185, which activates the enzyme. In terms of tissue distribution, expressed in the neuroepithelium of developing brain at stages 16 to 26.

The catalysed reaction is L-seryl-[protein] + ATP = O-phospho-L-seryl-[protein] + ADP + H(+). It carries out the reaction L-threonyl-[protein] + ATP = O-phospho-L-threonyl-[protein] + ADP + H(+). Activated by threonine and tyrosine phosphorylation. Its function is as follows. Responds to activation by environmental stress and pro-inflammatory cytokines by phosphorylating a number of transcription factors, primarily components of AP-1 such as JUN and ATF2 and thus regulates AP-1 transcriptional activity. May play a role in the development of the central nervous system during embryogenesis. May play a role in the regulation of the circadian clock. The polypeptide is Mitogen-activated protein kinase 9 (MAPK9) (Gallus gallus (Chicken)).